The following is a 1246-amino-acid chain: Superkiller complex protein 2 (1246 aa).

The interval 220–246 (LGGGDEDENEAVGQPGGPRGDTVSASP) is disordered. Residues Ser245 and Ser256 each carry the phosphoserine modification. The region spanning 319–475 (ILHLERHDSV…WIGRLKRRQI (157 aa)) is the Helicase ATP-binding domain. Residue 332–339 (AHTSAGKT) coordinates ATP. Residues 423–426 (DEVH) carry the DEVH box motif. The Helicase C-terminal domain maps to 585 to 755 (GLTSLDLTTS…LTYTMILNLL (171 aa)).

It belongs to the helicase family. SKI2 subfamily. In terms of assembly, component of the SKI complex which consists of SKIC2, SKIC3 and SKIC8. Interacts with HBS1L isoform 2.

The protein resides in the nucleus. It is found in the cytoplasm. It carries out the reaction ATP + H2O = ADP + phosphate + H(+). Its function is as follows. Helicase component of the SKI complex, a multiprotein complex that assists the RNA-degrading exosome during the mRNA decay and quality-control pathways. The SKI complex catalyzes mRNA extraction from 80S ribosomal complexes in the 3'-5' direction and channels mRNA to the cytosolic exosome for degradation. SKI-mediated extraction of mRNA from stalled ribosomes allow binding of the Pelota-HBS1L complex and subsequent ribosome disassembly by ABCE1 for ribosome recycling. In the nucleus, the SKI complex associates with transcriptionally active genes in a manner dependent on PAF1 complex (PAF1C). This Homo sapiens (Human) protein is Superkiller complex protein 2.